We begin with the raw amino-acid sequence, 369 residues long: MTEPVRVEVKTASPYPVVIGRGLLGDLVAEFDGARTVAIFHQPPLAETAEAVRAALAEKGIDAHRIEIPDAEDGKDLAVAGFCWDVLGRIGLTRSDAIMSLGGGAATDLTGFVAATWMRGVKVVHVPTTLLAMVDAAVGGKTGINTEAGKNLVGSFHEPGAVFIDLATLETVPHNEIVAGMAEVIKTGFIADPVILDLIEADPKAALDPSGTVLPELIRRSVEVKAKVVAADLRESDLREILNYGHTLGHAIERRERYKWRHGAAVSVGLVFAAELGRLAGRLDDATADRHKSILDLVGLPTSYDGDAFGDLMKGMQTDKKNRAGLLRFVVLDGLAKPGRLEGPDPSLLVAAYSAIARDPRPAGGTVLL.

NAD(+)-binding positions include 70-75, 104-108, 128-129, K141, K150, and 168-171; these read DAEDGK, GAATD, TT, and TLET. Zn(2+) contacts are provided by E183, H246, and H262.

Belongs to the sugar phosphate cyclases superfamily. Dehydroquinate synthase family. The cofactor is Co(2+). Requires Zn(2+) as cofactor. NAD(+) is required as a cofactor.

It localises to the cytoplasm. It catalyses the reaction 7-phospho-2-dehydro-3-deoxy-D-arabino-heptonate = 3-dehydroquinate + phosphate. It functions in the pathway metabolic intermediate biosynthesis; chorismate biosynthesis; chorismate from D-erythrose 4-phosphate and phosphoenolpyruvate: step 2/7. In terms of biological role, catalyzes the conversion of 3-deoxy-D-arabino-heptulosonate 7-phosphate (DAHP) to dehydroquinate (DHQ). This is 3-dehydroquinate synthase from Rhodococcus erythropolis (strain PR4 / NBRC 100887).